Reading from the N-terminus, the 261-residue chain is uncharacterized protein (261 aa).

A run of 6 helical transmembrane segments spans residues 31–51, 71–91, 101–121, 130–150, 167–187, and 213–233; these read TFLS…TGIV, TNVM…SWLL, LAYI…AGIA, LTSS…ASFI, LLLF…IPYV, and FAWL…YLAI.

The protein localises to the cell membrane. This is an uncharacterized protein from Mycoplasma genitalium (strain ATCC 33530 / DSM 19775 / NCTC 10195 / G37) (Mycoplasmoides genitalium).